The following is a 967-amino-acid chain: Sulfite dehydrogenase subunit A (967 aa).

The region spanning 15 to 71 (VEVKETTCYMCACRCGIRVHLRDGEVRYIDGNPNHPLNKGVICAKGSSGIMKQYSPG) is the 4Fe-4S Mo/W bis-MGD-type domain. 4 residues coordinate [4Fe-4S] cluster: Cys22, Cys25, Cys29, and Cys57.

It belongs to the prokaryotic molybdopterin-containing oxidoreductase family. Forms a heterotrimeric membrane-bound complex composed of a catalytic heterodimer (SoeAB) and a membrane anchor protein (SoeC). It depends on [4Fe-4S] cluster as a cofactor. Requires Mo-bis(molybdopterin guanine dinucleotide) as cofactor.

It is found in the cell inner membrane. It carries out the reaction a quinone + sulfite + H2O = a quinol + sulfate. It catalyses the reaction a menaquinone + sulfite + H2O = a menaquinol + sulfate. Part of the SoeABC complex that catalyzes the oxidation of sulfite to sulfate. The polypeptide is Sulfite dehydrogenase subunit A (Allochromatium vinosum (strain ATCC 17899 / DSM 180 / NBRC 103801 / NCIMB 10441 / D) (Chromatium vinosum)).